The following is a 192-amino-acid chain: Imidazoleglycerol-phosphate dehydratase (192 aa).

Belongs to the imidazoleglycerol-phosphate dehydratase family.

The protein localises to the cytoplasm. It catalyses the reaction D-erythro-1-(imidazol-4-yl)glycerol 3-phosphate = 3-(imidazol-4-yl)-2-oxopropyl phosphate + H2O. It participates in amino-acid biosynthesis; L-histidine biosynthesis; L-histidine from 5-phospho-alpha-D-ribose 1-diphosphate: step 6/9. This chain is Imidazoleglycerol-phosphate dehydratase, found in Staphylococcus aureus (strain MRSA252).